The sequence spans 213 residues: Large ribosomal subunit protein uL3 (213 aa).

A disordered region spans residues 131–168 (GPMSHGSKNHRLPGSTGAGTTPGRVYPGKRMAGRSGND).

Belongs to the universal ribosomal protein uL3 family. As to quaternary structure, part of the 50S ribosomal subunit. Forms a cluster with proteins L14 and L19.

One of the primary rRNA binding proteins, it binds directly near the 3'-end of the 23S rRNA, where it nucleates assembly of the 50S subunit. The chain is Large ribosomal subunit protein uL3 from Synechococcus elongatus (strain ATCC 33912 / PCC 7942 / FACHB-805) (Anacystis nidulans R2).